The following is a 446-amino-acid chain: Beta-glucosidase A (446 aa).

The Proton donor role is filled by E166. The active-site Nucleophile is E351.

Belongs to the glycosyl hydrolase 1 family.

It carries out the reaction Hydrolysis of terminal, non-reducing beta-D-glucosyl residues with release of beta-D-glucose.. It participates in glycan metabolism; cellulose degradation. The sequence is that of Beta-glucosidase A (bglA) from Thermotoga maritima (strain ATCC 43589 / DSM 3109 / JCM 10099 / NBRC 100826 / MSB8).